The chain runs to 181 residues: Protein GrpE (181 aa).

Residues 1–24 (MSEENIGENEVETPETEPSAEAEV) are compositionally biased toward acidic residues. The tract at residues 1–26 (MSEENIGENEVETPETEPSAEAEVES) is disordered.

The protein belongs to the GrpE family. Homodimer.

It is found in the cytoplasm. Functionally, participates actively in the response to hyperosmotic and heat shock by preventing the aggregation of stress-denatured proteins, in association with DnaK and GrpE. It is the nucleotide exchange factor for DnaK and may function as a thermosensor. Unfolded proteins bind initially to DnaJ; upon interaction with the DnaJ-bound protein, DnaK hydrolyzes its bound ATP, resulting in the formation of a stable complex. GrpE releases ADP from DnaK; ATP binding to DnaK triggers the release of the substrate protein, thus completing the reaction cycle. Several rounds of ATP-dependent interactions between DnaJ, DnaK and GrpE are required for fully efficient folding. The sequence is that of Protein GrpE from Rhizorhabdus wittichii (strain DSM 6014 / CCUG 31198 / JCM 15750 / NBRC 105917 / EY 4224 / RW1) (Sphingomonas wittichii).